The primary structure comprises 311 residues: Putative dihydroorotate dehydrogenase A (fumarate) (311 aa).

Residues lysine 45, 69 to 73 (NSMGL), and asparagine 128 each bind substrate. 45-46 (KT) is a binding site for FMN. Position 128 (asparagine 128) interacts with FMN. Cysteine 131 functions as the Nucleophile in the catalytic mechanism. FMN contacts are provided by lysine 165 and valine 193. Residue 194–195 (NS) participates in substrate binding. Residues glycine 220, 248 to 249 (GG), and 270 to 271 (GT) each bind FMN.

It belongs to the dihydroorotate dehydrogenase family. Type 1 subfamily. As to quaternary structure, homodimer. FMN serves as cofactor.

It is found in the cytoplasm. The enzyme catalyses (S)-dihydroorotate + fumarate = orotate + succinate. It participates in pyrimidine metabolism; UMP biosynthesis via de novo pathway. Catalyzes the conversion of dihydroorotate to orotate with fumarate as the electron acceptor. The protein is Putative dihydroorotate dehydrogenase A (fumarate) (pyrD) of Streptococcus equi subsp. equi (strain 4047).